The following is a 398-amino-acid chain: Mannitol-1-phosphate 5-dehydrogenase (398 aa).

A10–G21 contacts NAD(+). The active site involves K221.

It belongs to the mannitol dehydrogenase family. As to quaternary structure, monomer.

The catalysed reaction is D-mannitol 1-phosphate + NAD(+) = beta-D-fructose 6-phosphate + NADH + H(+). In terms of biological role, catalyzes the NAD(H)-dependent interconversion of D-fructose 6-phosphate and D-mannitol 1-phosphate in the mannitol metabolic pathway. This chain is Mannitol-1-phosphate 5-dehydrogenase, found in Chaetomium globosum (strain ATCC 6205 / CBS 148.51 / DSM 1962 / NBRC 6347 / NRRL 1970) (Soil fungus).